The primary structure comprises 498 residues: Probable malate:quinone oxidoreductase 2 (498 aa).

It belongs to the MQO family. The cofactor is FAD.

It carries out the reaction (S)-malate + a quinone = a quinol + oxaloacetate. It participates in carbohydrate metabolism; tricarboxylic acid cycle; oxaloacetate from (S)-malate (quinone route): step 1/1. In Staphylococcus epidermidis (strain ATCC 35984 / DSM 28319 / BCRC 17069 / CCUG 31568 / BM 3577 / RP62A), this protein is Probable malate:quinone oxidoreductase 2.